The following is a 1267-amino-acid chain: Ankyrin repeat and ELMO domain-containing protein D (1267 aa).

The ELMO domain occupies 307-466 (SHQRLLETLW…FVSGLASEVL (160 aa)). Positions 486–496 (KKKEKKSEKRG) are enriched in basic and acidic residues. The interval 486–598 (KKKEKKSEKR…NNHILNNNHL (113 aa)) is disordered. Residues 507 to 598 (GSNGNINSTT…NNHILNNNHL (92 aa)) show a composition bias toward low complexity. ANK repeat units follow at residues 655–685 (DGNS…FLNT), 689–718 (QGLT…DPFI), 767–796 (TLET…NINN), and 801–830 (SGQN…DPSI). 4 disordered regions span residues 854–908 (NPTK…NSTS), 924–1040 (TSIN…SPIF), 1057–1082 (SPTQ…NGAE), and 1103–1215 (ENLT…PPKD). 3 stretches are compositionally biased toward low complexity: residues 859 to 870 (SRSTSSTSSSTS), 895 to 908 (ITNN…NSTS), and 924 to 1033 (TSIN…STSP). Polar residues predominate over residues 1057 to 1080 (SPTQESPQVISTPTSPPYLSNNNG). Composition is skewed to low complexity over residues 1108–1176 (NSGN…IGSH) and 1184–1213 (HNGP…VTPP).

The chain is Ankyrin repeat and ELMO domain-containing protein D (elmoD) from Dictyostelium discoideum (Social amoeba).